We begin with the raw amino-acid sequence, 393 residues long: Methylthioribose kinase (393 aa).

ATP-binding positions include asparagine 38, lysine 53, and 107-109 (EDL). Aspartate 225 is a substrate binding site. 242–244 (DPE) contacts ATP. Arginine 332 is a binding site for substrate.

Belongs to the methylthioribose kinase family. Homodimer.

The catalysed reaction is 5-(methylsulfanyl)-D-ribose + ATP = 5-(methylsulfanyl)-alpha-D-ribose 1-phosphate + ADP + H(+). It participates in amino-acid biosynthesis; L-methionine biosynthesis via salvage pathway; S-methyl-5-thio-alpha-D-ribose 1-phosphate from S-methyl-5'-thioadenosine (hydrolase route): step 2/2. Catalyzes the phosphorylation of methylthioribose into methylthioribose-1-phosphate. This is Methylthioribose kinase from Bacillus cereus (strain ATCC 10987 / NRS 248).